Consider the following 349-residue polypeptide: Hyaluronidase Tab y 2.0101 (349 aa).

A signal peptide spans 1–25 (MKLHQGLVCLSVLILLPTCILGDRK). Cystine bridges form between Cys-37/Cys-328 and Cys-205/Cys-216. Asn-41, Asn-81, Asn-99, and Asn-119 each carry an N-linked (GlcNAc...) asparagine glycan. Residue Glu-129 is the Proton donor of the active site. N-linked (GlcNAc...) asparagine glycosylation occurs at Asn-147. 2 N-linked (GlcNAc...) asparagine glycosylation sites follow: Asn-251 and Asn-297.

It belongs to the glycosyl hydrolase 56 family. As to expression, expressed in salivary glands.

The protein localises to the secreted. It catalyses the reaction Random hydrolysis of (1-&gt;4)-linkages between N-acetyl-beta-D-glucosamine and D-glucuronate residues in hyaluronate.. Its function is as follows. Hydrolyzes high molecular weight hyaluronic acid to produce small oligosaccharides. The protein is Hyaluronidase Tab y 2.0101 of Tabanus yao (Horsefly).